The following is a 154-amino-acid chain: CASP-like protein 5B3 (154 aa).

The Cytoplasmic segment spans residues 1–17 (MKDVVGSPGTWSGMSLR). The chain crosses the membrane as a helical span at residues 18 to 38 (VSQCVFAGASVVAMASAYGFS). N-linked (GlcNAc...) asparagine glycosylation is present at N39. Residues 39 to 42 (NYTA) lie on the Extracellular side of the membrane. The helical transmembrane segment at 43 to 63 (FCYLIASMGLQLLWSFGLACL) threads the bilayer. Topologically, residues 64–77 (DIYSLQTKRDLHNP) are cytoplasmic. Residues 78 to 98 (VLVSLFVVGDWVTAILSFAAA) form a helical membrane-spanning segment. The Extracellular portion of the chain corresponds to 99 to 129 (SASAGVTILFERDVHFCRMYPQLSCGRYELS). The chain crosses the membrane as a helical span at residues 130–150 (VILAFITWSFIATSAVSMFWL). At 151-154 (LASL) the chain is on the cytoplasmic side.

It belongs to the Casparian strip membrane proteins (CASP) family. In terms of assembly, homodimer and heterodimers.

Its subcellular location is the cell membrane. This Oryza sativa subsp. indica (Rice) protein is CASP-like protein 5B3.